Here is a 206-residue protein sequence, read N- to C-terminus: Charged multivesicular body protein 6 (206 aa).

Residue glycine 2 is the site of N-myristoyl glycine attachment. The stretch at 11–103 (TRVTEQDRAV…AQIEMKVIEG (93 aa)) forms a coiled coil. A disordered region spans residues 167–206 (EADLELPEVPGEELPEVPEQEPVREKERVKKKPEREMVAV). The span at 168 to 185 (ADLELPEVPGEELPEVPE) shows a compositional bias: acidic residues. The Type-2 MIT-interacting motif signature appears at 170–181 (LELPEVPGEELP). The span at 187 to 206 (EPVREKERVKKKPEREMVAV) shows a compositional bias: basic and acidic residues.

It belongs to the SNF7 family. As to quaternary structure, probable core component of the endosomal sorting required for transport complex III (ESCRT-III). ESCRT-III components are thought to multimerize to form a flat lattice on the perimeter membrane of the endosome.

Its subcellular location is the endomembrane system. It localises to the late endosome membrane. Probable core component of the endosomal sorting required for transport complex III (ESCRT-III) which is involved in multivesicular bodies (MVBs) formation and sorting of endosomal cargo proteins into MVBs. MVBs contain intraluminal vesicles (ILVs) that are generated by invagination and scission from the limiting membrane of the endosome and mostly are delivered to lysosomes enabling degradation of membrane proteins, such as stimulated growth factor receptors, lysosomal enzymes and lipids. In the ESCRT-III complex, it probably serves as an acceptor for the ESCRT-II complex on endosomal membranes. The chain is Charged multivesicular body protein 6 (chmp6) from Danio rerio (Zebrafish).